A 122-amino-acid polypeptide reads, in one-letter code: Acidic phospholipase A2 (122 aa).

Disulfide bonds link Cys26/Cys115, Cys28/Cys44, Cys43/Cys95, Cys49/Cys122, Cys50/Cys88, Cys57/Cys81, and Cys75/Cys86. Positions 27, 29, and 31 each coordinate Ca(2+). His47 is a catalytic residue. Residue Asp48 coordinates Ca(2+). Asp89 is an active-site residue.

It belongs to the phospholipase A2 family. Group II subfamily. D49 sub-subfamily. The cofactor is Ca(2+). Post-translationally, contains 7 disulfide bonds. Expressed by the venom gland.

The protein resides in the secreted. The catalysed reaction is a 1,2-diacyl-sn-glycero-3-phosphocholine + H2O = a 1-acyl-sn-glycero-3-phosphocholine + a fatty acid + H(+). Functionally, snake venom phospholipase A2 (PLA2) that displays low systemic toxicity and causes severe symptoms only at very high concentrations (15 mg/kg). Has neither coagulant nor anticoagulant activity. PLA2 catalyzes the calcium-dependent hydrolysis of the 2-acyl groups in 3-sn-phosphoglycerides. The polypeptide is Acidic phospholipase A2 (Bothrops ammodytoides (Yararanata)).